The following is a 92-amino-acid chain: Putative pterin-4-alpha-carbinolamine dehydratase (92 aa).

It belongs to the pterin-4-alpha-carbinolamine dehydratase family.

The catalysed reaction is (4aS,6R)-4a-hydroxy-L-erythro-5,6,7,8-tetrahydrobiopterin = (6R)-L-erythro-6,7-dihydrobiopterin + H2O. The sequence is that of Putative pterin-4-alpha-carbinolamine dehydratase from Cereibacter sphaeroides (strain ATCC 17023 / DSM 158 / JCM 6121 / CCUG 31486 / LMG 2827 / NBRC 12203 / NCIMB 8253 / ATH 2.4.1.) (Rhodobacter sphaeroides).